A 286-amino-acid polypeptide reads, in one-letter code: Formyltetrahydrofolate deformylase (286 aa).

The ACT domain occupies 8 to 88 (VLTLQCPEGI…MDWQLRERGQ (81 aa)). Residue aspartate 230 is part of the active site.

This sequence belongs to the PurU family.

It catalyses the reaction (6R)-10-formyltetrahydrofolate + H2O = (6S)-5,6,7,8-tetrahydrofolate + formate + H(+). The protein operates within purine metabolism; IMP biosynthesis via de novo pathway; formate from 10-formyl-5,6,7,8-tetrahydrofolate: step 1/1. Its function is as follows. Catalyzes the hydrolysis of 10-formyltetrahydrofolate (formyl-FH4) to formate and tetrahydrofolate (FH4). This chain is Formyltetrahydrofolate deformylase, found in Corynebacterium sp. (strain P-1).